Here is a 29-residue protein sequence, read N- to C-terminus: Galanin (29 aa).

A Threonine amide modification is found at Thr29.

It belongs to the galanin family.

The protein resides in the secreted. Functionally, contracts smooth muscle of the gastrointestinal and genitourinary tract, regulates growth hormone release, modulates insulin release, and may be involved in the control of adrenal secretion. This Gallus gallus (Chicken) protein is Galanin (GAL).